The sequence spans 38 residues: Spheniscin-1 (38 aa).

3 cysteine pairs are disulfide-bonded: cysteine 5–cysteine 33, cysteine 12–cysteine 27, and cysteine 17–cysteine 34.

As to quaternary structure, monomer. Secreted into the stomach cavity.

It localises to the secreted. Its function is as follows. Has antifungal activity and antibacterial activity against Gram-positive and Gram-negative bacteria. Involved in the process of food preservation in the stomach during the incubation fast. May also be present during infection. The sequence is that of Spheniscin-1 from Aptenodytes patagonicus (King penguin).